A 340-amino-acid chain; its full sequence is Aspartate-semialdehyde dehydrogenase (340 aa).

Residues 11–14 (TGEV) and 39–40 (RS) contribute to the NADP(+) site. R100 contributes to the phosphate binding site. C131 acts as the Acyl-thioester intermediate in catalysis. Position 158 (Q158) interacts with substrate. Position 161-162 (161-162 (SG)) interacts with NADP(+). Residue K216 participates in phosphate binding. Position 238 (R238) interacts with substrate. H245 acts as the Proton acceptor in catalysis. Residue N318 participates in NADP(+) binding.

The protein belongs to the aspartate-semialdehyde dehydrogenase family. As to quaternary structure, homodimer.

The enzyme catalyses L-aspartate 4-semialdehyde + phosphate + NADP(+) = 4-phospho-L-aspartate + NADPH + H(+). Its pathway is amino-acid biosynthesis; L-lysine biosynthesis via DAP pathway; (S)-tetrahydrodipicolinate from L-aspartate: step 2/4. It participates in amino-acid biosynthesis; L-methionine biosynthesis via de novo pathway; L-homoserine from L-aspartate: step 2/3. It functions in the pathway amino-acid biosynthesis; L-threonine biosynthesis; L-threonine from L-aspartate: step 2/5. Catalyzes the NADPH-dependent formation of L-aspartate-semialdehyde (L-ASA) by the reductive dephosphorylation of L-aspartyl-4-phosphate. This chain is Aspartate-semialdehyde dehydrogenase, found in Aquifex aeolicus (strain VF5).